A 107-amino-acid chain; its full sequence is Protein Rev (107 aa).

Residues serine 5 and serine 8 each carry the phosphoserine; by host CK2 modification. The segment at 18 to 26 (IIKILYQSN) is homomultimerization. Disordered stretches follow at residues 26–50 (NPYP…ARQR) and 82–107 (NINC…VGNP). Residues 34-50 (TRQARRNRRRRWRARQR) carry the Nuclear localization signal and RNA-binding (RRE) motif. The span at 36–50 (QARRNRRRRWRARQR) shows a compositional bias: basic residues. The Nuclear export signal and binding to XPO1 motif lies at 73 to 84 (FQLPPIERLNIN). Residues 86–101 (SESGGTSGTQQPQGNT) show a composition bias toward low complexity. Serine 92 carries the phosphoserine; by host modification.

It belongs to the HIV-1 REV protein family. As to quaternary structure, homomultimer; when bound to the RRE. Multimeric assembly is essential for activity and may involve XPO1. Binds to human KPNB1, XPO1, TNPO1, RANBP5 and IPO7. Interacts with the viral Integrase. Interacts with human KHDRBS1. Interacts with human NAP1; this interaction decreases Rev multimerization and stimulates its activity. Interacts with human DEAD-box helicases DDX3 and DDX24; these interactions may serve for viral RNA export to the cytoplasm and packaging, respectively. Interacts with human PSIP1; this interaction may inhibit HIV-1 DNA integration by promoting dissociation of the Integrase-LEDGF/p75 complex. Post-translationally, asymmetrically arginine dimethylated at one site by host PRMT6. Methylation impairs the RNA-binding activity and export of viral RNA from the nucleus to the cytoplasm. Phosphorylated by protein kinase CK2. Presence of, and maybe binding to the N-terminus of the regulatory beta subunit of CK2 is necessary for CK2-mediated Rev's phosphorylation.

The protein resides in the host nucleus. It localises to the host nucleolus. It is found in the host cytoplasm. In terms of biological role, escorts unspliced or incompletely spliced viral pre-mRNAs (late transcripts) out of the nucleus of infected cells. These pre-mRNAs carry a recognition sequence called Rev responsive element (RRE) located in the env gene, that is not present in fully spliced viral mRNAs (early transcripts). This function is essential since most viral proteins are translated from unspliced or partially spliced pre-mRNAs which cannot exit the nucleus by the pathway used by fully processed cellular mRNAs. Rev itself is translated from a fully spliced mRNA that readily exits the nucleus. Rev's nuclear localization signal (NLS) binds directly to KPNB1/Importin beta-1 without previous binding to KPNA1/Importin alpha-1. KPNB1 binds to the GDP bound form of RAN (Ran-GDP) and targets Rev to the nucleus. In the nucleus, the conversion from Ran-GDP to Ran-GTP dissociates Rev from KPNB1 and allows Rev's binding to the RRE in viral pre-mRNAs. Rev multimerization on the RRE via cooperative assembly exposes its nuclear export signal (NES) to the surface. Rev can then form a complex with XPO1/CRM1 and Ran-GTP, leading to nuclear export of the complex. Conversion from Ran-GTP to Ran-GDP mediates dissociation of the Rev/RRE/XPO1/RAN complex, so that Rev can return to the nucleus for a subsequent round of export. Beside KPNB1, also seems to interact with TNPO1/Transportin-1, RANBP5/IPO5 and IPO7/RANBP7 for nuclear import. The nucleoporin-like HRB/RIP is an essential cofactor that probably indirectly interacts with Rev to release HIV RNAs from the perinuclear region to the cytoplasm. This is Protein Rev from Human immunodeficiency virus type 1 group M subtype C (isolate 92BR025) (HIV-1).